The primary structure comprises 1367 residues: Mediator of RNA polymerase II transcription subunit 23 (1367 aa).

The tract at residues 1343–1367 (PPQALSSGSPAPQANQVPTALPVTQ) is disordered. Polar residues predominate over residues 1346–1367 (ALSSGSPAPQANQVPTALPVTQ).

It belongs to the Mediator complex subunit 23 family. Component of the Mediator complex, which is composed of MED1, MED4, MED6, MED7, MED8, MED9, MED10, MED11, MED12, MED13, MED13L, MED14, MED15, MED16, MED17, MED18, MED19, MED20, MED21, MED22, MED23, MED24, MED25, MED26, MED27, MED29, MED30, MED31, CCNC, CDK8 and CDC2L6/CDK11. The MED12, MED13, CCNC and CDK8 subunits form a distinct module termed the CDK8 module. Mediator containing the CDK8 module is less active than Mediator lacking this module in supporting transcriptional activation. Individual preparations of the Mediator complex lacking one or more distinct subunits have been variously termed ARC, CRSP, DRIP, PC2, SMCC and TRAP. Interacts with CDK8, CEBPB, CTNNB1, ELK1 and GLI3. Interacts with the adenovirus E1A protein.

It is found in the nucleus. Component of the Mediator complex, a coactivator involved in the regulated transcription of nearly all RNA polymerase II-dependent genes. Mediator functions as a bridge to convey information from gene-specific regulatory proteins to the basal RNA polymerase II transcription machinery. Mediator is recruited to promoters by direct interactions with regulatory proteins and serves as a scaffold for the assembly of a functional pre-initiation complex with RNA polymerase II and the general transcription factors. Also required for transcriptional activation subsequent to the assembly of the pre-initiation complex. Required for transcriptional activation by adenovirus E1A protein. Required for ELK1-dependent transcriptional activation in response to activated Ras signaling. This is Mediator of RNA polymerase II transcription subunit 23 (Med23) from Rattus norvegicus (Rat).